A 222-amino-acid polypeptide reads, in one-letter code: Putative N-acetylmannosamine-6-phosphate 2-epimerase (222 aa).

Belongs to the NanE family.

It catalyses the reaction an N-acyl-D-glucosamine 6-phosphate = an N-acyl-D-mannosamine 6-phosphate. It functions in the pathway amino-sugar metabolism; N-acetylneuraminate degradation; D-fructose 6-phosphate from N-acetylneuraminate: step 3/5. Converts N-acetylmannosamine-6-phosphate (ManNAc-6-P) to N-acetylglucosamine-6-phosphate (GlcNAc-6-P). The sequence is that of Putative N-acetylmannosamine-6-phosphate 2-epimerase from Staphylococcus saprophyticus subsp. saprophyticus (strain ATCC 15305 / DSM 20229 / NCIMB 8711 / NCTC 7292 / S-41).